The chain runs to 212 residues: Ribosomal RNA small subunit methyltransferase G (212 aa).

Residues Gly73, 127 to 128 (IE), and Arg143 contribute to the S-adenosyl-L-methionine site.

It belongs to the methyltransferase superfamily. RNA methyltransferase RsmG family.

The protein resides in the cytoplasm. It catalyses the reaction guanosine(527) in 16S rRNA + S-adenosyl-L-methionine = N(7)-methylguanosine(527) in 16S rRNA + S-adenosyl-L-homocysteine. Specifically methylates the N7 position of guanine in position 527 of 16S rRNA. The sequence is that of Ribosomal RNA small subunit methyltransferase G from Methylobacterium sp. (strain 4-46).